The following is a 150-amino-acid chain: Cyanate hydratase (150 aa).

Catalysis depends on residues arginine 91, glutamate 94, and serine 117.

It belongs to the cyanase family.

It catalyses the reaction cyanate + hydrogencarbonate + 3 H(+) = NH4(+) + 2 CO2. Its function is as follows. Catalyzes the reaction of cyanate with bicarbonate to produce ammonia and carbon dioxide. The polypeptide is Cyanate hydratase (Synechococcus sp. (strain CC9311)).